A 306-amino-acid polypeptide reads, in one-letter code: Putative S-adenosyl-L-methionine-dependent methyltransferase MAP_4190c (306 aa).

Residues Asp-129 and 158-159 (DL) each bind S-adenosyl-L-methionine.

Belongs to the UPF0677 family.

Its function is as follows. Exhibits S-adenosyl-L-methionine-dependent methyltransferase activity. In Mycolicibacterium paratuberculosis (strain ATCC BAA-968 / K-10) (Mycobacterium paratuberculosis), this protein is Putative S-adenosyl-L-methionine-dependent methyltransferase MAP_4190c.